The following is a 597-amino-acid chain: Sodium/mannose cotransporter SLC5A10 (597 aa).

At Met1–Gln16 the chain is on the extracellular side. Asn5 is a glycosylation site (N-linked (GlcNAc...) asparagine). Residues Leu17–Ile37 form a helical membrane-spanning segment. At Trp38–Gly73 the chain is on the cytoplasmic side. Residues Ser74 to Phe94 traverse the membrane as a helical segment. The Extracellular portion of the chain corresponds to Glu95–Tyr100. Asn97 carries N-linked (GlcNAc...) asparagine glycosylation. The helical transmembrane segment at Val101–Met121 threads the bilayer. At Pro122–Ser139 the chain is on the cytoplasmic side. Residues Val140–Val162 traverse the membrane as a helical segment. Residues His163–Thr174 are Extracellular-facing. Residues Val175–Tyr195 traverse the membrane as a helical segment. The Cytoplasmic portion of the chain corresponds to Thr196 to Thr201. Residues Leu202–Tyr222 form a helical membrane-spanning segment. Residues Glu223–Thr265 lie on the Extracellular side of the membrane. The helical transmembrane segment at Gly266–Val286 threads the bilayer. Residues Gln287 to Gly301 lie on the Cytoplasmic side of the membrane. The helical transmembrane segment at Ser302–Ile322 threads the bilayer. Residues Ser323–Arg367 are Extracellular-facing. Residues Gly368 to Ser388 traverse the membrane as a helical segment. Topologically, residues Ser389 to Leu410 are cytoplasmic. Residues Leu411–Val431 traverse the membrane as a helical segment. The Extracellular segment spans residues Leu432 to Met444. The chain crosses the membrane as a helical span at residues Gln445–Trp465. Topologically, residues Arg466 to Gly472 are cytoplasmic. The chain crosses the membrane as a helical span at residues Ala473–Leu493. Topologically, residues His494–Tyr514 are extracellular. The chain crosses the membrane as a helical span at residues Leu515 to Leu535. At Thr536 to Arg576 the chain is on the cytoplasmic side. The helical transmembrane segment at Val577–Ala597 threads the bilayer.

The protein belongs to the sodium:solute symporter (SSF) (TC 2.A.21) family. Predominantyl expressed in kidney. Also detected at very low levels in testes, skeletal muscle, and spleen.

The protein resides in the apical cell membrane. It catalyses the reaction D-mannose(out) + Na(+)(out) = D-mannose(in) + Na(+)(in). It carries out the reaction D-fructopyranose(out) + Na(+)(out) = D-fructopyranose(in) + Na(+)(in). Functionally, electrogenic Na+-coupled sugar symporter that actively transports D-mannose or D-fructose at the plasma membrane, with a Na+ to sugar coupling ratio of 1:1. Transporter activity is driven by a transmembrane Na+ electrochemical gradient set by the Na+/K+ pump. Exclusively recognizes sugar substrates having a pyranose ring with an axial hydroxyl group on carbon 2. Has likely evolved to enable renal reabsorption of D-mannose, an important constituent of oligosaccharide chains of glycoproteins. Contributes to dietary D-fructose reabsorption from glomerular filtrate across the brush border of the kidney. This chain is Sodium/mannose cotransporter SLC5A10 (SLC5A10), found in Bos taurus (Bovine).